The chain runs to 515 residues: Maturase K (515 aa).

It belongs to the intron maturase 2 family. MatK subfamily.

It is found in the plastid. It localises to the chloroplast. Functionally, usually encoded in the trnK tRNA gene intron. Probably assists in splicing its own and other chloroplast group II introns. This chain is Maturase K, found in Picea engelmannii (Engelmann's spruce).